The sequence spans 619 residues: Sorting nexin-41 (619 aa).

Residues methionine 1–glycine 95 form a disordered region. Residues proline 108 to tryptophan 224 enclose the PX domain. Arginine 142, serine 144, lysine 168, and arginine 191 together coordinate a 1,2-diacyl-sn-glycero-3-phospho-(1D-myo-inositol-3-phosphate). The segment at tyrosine 444–serine 510 is disordered. Basic and acidic residues predominate over residues proline 454–serine 467.

It belongs to the sorting nexin family.

The protein localises to the endosome membrane. The protein resides in the endomembrane system. In terms of biological role, may be required for cytoplasm to vacuole transport (Cvt) and pexophagy. This is Sorting nexin-41 (vsp-6) from Neurospora crassa (strain ATCC 24698 / 74-OR23-1A / CBS 708.71 / DSM 1257 / FGSC 987).